The following is a 216-amino-acid chain: Adenylate kinase (216 aa).

An ATP-binding site is contributed by 10-15; sequence GAGKGT. The NMP stretch occupies residues 30 to 59; the sequence is STGDMFRAAMKNETALGLEAKSYIDKGELV. Residues Thr31, Arg36, 57–59, 85–88, and Gln92 contribute to the AMP site; these read ELV and GFPR. Residues 126-164 are LID; that stretch reads GRFICRTCGATYHKLFNPPKVEGTCDRCGGHEFYQREDD. Arg127 provides a ligand contact to ATP. Zn(2+) contacts are provided by Cys130 and Cys133. 136-137 lines the ATP pocket; it reads TY. Cys150 and Cys153 together coordinate Zn(2+). Residues Arg161 and Arg172 each contribute to the AMP site. Residue Arg200 coordinates ATP.

This sequence belongs to the adenylate kinase family. As to quaternary structure, monomer.

The protein resides in the cytoplasm. The enzyme catalyses AMP + ATP = 2 ADP. It functions in the pathway purine metabolism; AMP biosynthesis via salvage pathway; AMP from ADP: step 1/1. Its function is as follows. Catalyzes the reversible transfer of the terminal phosphate group between ATP and AMP. Plays an important role in cellular energy homeostasis and in adenine nucleotide metabolism. This is Adenylate kinase from Enterococcus faecalis (strain ATCC 700802 / V583).